Reading from the N-terminus, the 142-residue chain is Transcription antitermination protein NusB (142 aa).

It belongs to the NusB family.

Functionally, involved in transcription antitermination. Required for transcription of ribosomal RNA (rRNA) genes. Binds specifically to the boxA antiterminator sequence of the ribosomal RNA (rrn) operons. In Streptococcus uberis (strain ATCC BAA-854 / 0140J), this protein is Transcription antitermination protein NusB.